The sequence spans 343 residues: Major capsid protein VP1 (343 aa).

The protein belongs to the polyomaviruses coat protein VP1 family. Homomultimer; disulfide-linked. The virus capsid is composed of 72 icosahedral units, each one composed of five disulfide-linked copies of VP1. Interacts with minor capsid proteins VP2 and VP3.

Its subcellular location is the virion. The protein localises to the host nucleus. Forms an icosahedral capsid with a T=7 symmetry and a 46-48 nm diameter. The capsid is composed of 72 pentamers linked to each other by disulfide bonds and associated with VP2 or VP3 proteins. Interacts with sialic acids on the cell surface to provide virion attachment to target cell. Once attached, the virion is internalized by endocytosis and traffics to the endoplasmic reticulum. Inside the endoplasmic reticulum, the protein folding machinery isomerizes VP1 interpentamer disulfide bonds, thereby triggering initial uncoating. Next, the virion uses the endoplasmic reticulum-associated degradation machinery to probably translocate in the cytosol before reaching the nucleus. Nuclear entry of the viral DNA involves the selective exposure and importin recognition of VP2/Vp3 nuclear localization signal. In late phase of infection, neo-synthesized VP1 encapsulates replicated genomic DNA in the nucleus, and participates in rearranging nucleosomes around the viral DNA. The polypeptide is Major capsid protein VP1 (Psittacidae (parrots)).